Consider the following 318-residue polypeptide: Coproporphyrin III ferrochelatase (318 aa).

Residues His186 and Glu268 each contribute to the Fe(2+) site.

The protein belongs to the ferrochelatase family.

The protein localises to the cytoplasm. It carries out the reaction Fe-coproporphyrin III + 2 H(+) = coproporphyrin III + Fe(2+). Its pathway is porphyrin-containing compound metabolism; protoheme biosynthesis. In terms of biological role, involved in coproporphyrin-dependent heme b biosynthesis. Catalyzes the insertion of ferrous iron into coproporphyrin III to form Fe-coproporphyrin III. This chain is Coproporphyrin III ferrochelatase, found in Lactococcus lactis subsp. cremoris (strain MG1363).